An 89-amino-acid polypeptide reads, in one-letter code: Pigment-dispersing hormone peptides (89 aa).

The first 22 residues, 1-22, serve as a signal peptide directing secretion; it reads MTAMAVSGKLLTALVLSTYILG. Ala86 is modified (alanine amide).

This sequence belongs to the arthropod PDH family.

The protein localises to the secreted. Its function is as follows. Capable of inducing pigment dispersion in the chromatophores of the fiddler crab Uca pugilator. In Romalea microptera (Eastern lubber grasshopper), this protein is Pigment-dispersing hormone peptides.